Consider the following 512-residue polypeptide: Protein singed (512 aa).

This sequence belongs to the fascin family. As to quaternary structure, interacts with Rab35, with stronger binding to the Rab35-GTP form compared to the Rab35-GDP form.

It localises to the cytoplasm. The protein localises to the cytoskeleton. In terms of biological role, acts as an actin bundling protein. May have a role in the asymmetric organization and/or movement of cytoplasmic components. It has a role in somatic cells during the formation of adult bristles and hairs, and in the female germline during oogenesis. This chain is Protein singed (sn), found in Drosophila melanogaster (Fruit fly).